The chain runs to 953 residues: Isoleucine--tRNA ligase (953 aa).

A 'HIGH' region motif is present at residues 58–68 (PYANGNIHLGH). Glu565 contributes to the L-isoleucyl-5'-AMP binding site. The 'KMSKS' region signature appears at 606 to 610 (KMSKS). Lys609 contacts ATP. Cys916, Cys919, Cys936, and Cys939 together coordinate Zn(2+).

The protein belongs to the class-I aminoacyl-tRNA synthetase family. IleS type 1 subfamily. In terms of assembly, monomer. The cofactor is Zn(2+).

It localises to the cytoplasm. The enzyme catalyses tRNA(Ile) + L-isoleucine + ATP = L-isoleucyl-tRNA(Ile) + AMP + diphosphate. Catalyzes the attachment of isoleucine to tRNA(Ile). As IleRS can inadvertently accommodate and process structurally similar amino acids such as valine, to avoid such errors it has two additional distinct tRNA(Ile)-dependent editing activities. One activity is designated as 'pretransfer' editing and involves the hydrolysis of activated Val-AMP. The other activity is designated 'posttransfer' editing and involves deacylation of mischarged Val-tRNA(Ile). The sequence is that of Isoleucine--tRNA ligase from Colwellia psychrerythraea (strain 34H / ATCC BAA-681) (Vibrio psychroerythus).